Reading from the N-terminus, the 285-residue chain is Integrin alpha-1 (285 aa).

Residues 1 to 285 (ENMTFGTTLV…HYSQDWVMLG (285 aa)) lie on the Extracellular side of the membrane. N-linked (GlcNAc...) asparagine glycosylation is found at Asn-2, Asn-40, Asn-208, and Asn-232. Residues 66–279 (IVLDGSNSIY…QAGFSAHYSQ (214 aa)) form the VWFA domain.

It belongs to the integrin alpha chain family. Heterodimer of an alpha and a beta subunit. Alpha-1 associates with beta-1.

The protein localises to the membrane. Integrin alpha-1/beta-1 is a receptor for laminin and collagen. It recognizes the proline-hydroxylated sequence G-F-P-G-E-R in collagen. Involved in anchorage-dependent, negative regulation of EGF-stimulated cell growth. The protein is Integrin alpha-1 (ITGA1) of Gallus gallus (Chicken).